The chain runs to 203 residues: Small ribosomal subunit protein uS4 (203 aa).

An S4 RNA-binding domain is found at 93 to 154 (CRFDNVVFRA…KSRNMDAVRN (62 aa)).

This sequence belongs to the universal ribosomal protein uS4 family. In terms of assembly, part of the 30S ribosomal subunit. Contacts protein S5. The interaction surface between S4 and S5 is involved in control of translational fidelity.

One of the primary rRNA binding proteins, it binds directly to 16S rRNA where it nucleates assembly of the body of the 30S subunit. Its function is as follows. With S5 and S12 plays an important role in translational accuracy. The polypeptide is Small ribosomal subunit protein uS4 (Chloroherpeton thalassium (strain ATCC 35110 / GB-78)).